Here is a 159-residue protein sequence, read N- to C-terminus: Phosphopantetheine adenylyltransferase (159 aa).

Threonine 10 contacts substrate. Residues 10–11 (TF) and histidine 18 each bind ATP. The substrate site is built by lysine 42, methionine 74, and arginine 88. ATP-binding positions include 89 to 91 (GLR), glutamate 99, and 124 to 130 (WSFISSS).

It belongs to the bacterial CoaD family. Homohexamer. It depends on Mg(2+) as a cofactor.

Its subcellular location is the cytoplasm. It catalyses the reaction (R)-4'-phosphopantetheine + ATP + H(+) = 3'-dephospho-CoA + diphosphate. It participates in cofactor biosynthesis; coenzyme A biosynthesis; CoA from (R)-pantothenate: step 4/5. In terms of biological role, reversibly transfers an adenylyl group from ATP to 4'-phosphopantetheine, yielding dephospho-CoA (dPCoA) and pyrophosphate. The protein is Phosphopantetheine adenylyltransferase of Salmonella choleraesuis (strain SC-B67).